The chain runs to 213 residues: Cytokinin riboside 5'-monophosphate phosphoribohydrolase LOG1 (213 aa).

Substrate-binding positions include E78, 96–97, 113–119, and T125; these read RK and GYGTLEE.

The protein belongs to the LOG family. Expressed in roots and shoots. Detected in the vascular tissues of roots, cotyledons, leaves and pistils, in the shoot apical meristem and in immature flowers.

It localises to the cytoplasm. Its subcellular location is the nucleus. The catalysed reaction is N(6)-(dimethylallyl)adenosine 5'-phosphate + H2O = N(6)-dimethylallyladenine + D-ribose 5-phosphate. It carries out the reaction 9-ribosyl-trans-zeatin 5'-phosphate + H2O = trans-zeatin + D-ribose 5-phosphate. Functionally, cytokinin-activating enzyme working in the direct activation pathway. Phosphoribohydrolase that converts inactive cytokinin nucleotides to the biologically active free-base forms. This Arabidopsis thaliana (Mouse-ear cress) protein is Cytokinin riboside 5'-monophosphate phosphoribohydrolase LOG1 (LOG1).